The chain runs to 176 residues: Phosphopantetheine adenylyltransferase (176 aa).

Residue Ser-8 coordinates substrate. ATP contacts are provided by residues 8 to 9 (SF) and His-16. Substrate is bound by residues Lys-40, Thr-72, and Arg-86. ATP-binding positions include 87 to 89 (GLR), Glu-97, and 122 to 128 (YSFLSSS).

It belongs to the bacterial CoaD family. As to quaternary structure, homohexamer. The cofactor is Mg(2+).

It is found in the cytoplasm. The catalysed reaction is (R)-4'-phosphopantetheine + ATP + H(+) = 3'-dephospho-CoA + diphosphate. The protein operates within cofactor biosynthesis; coenzyme A biosynthesis; CoA from (R)-pantothenate: step 4/5. Reversibly transfers an adenylyl group from ATP to 4'-phosphopantetheine, yielding dephospho-CoA (dPCoA) and pyrophosphate. The protein is Phosphopantetheine adenylyltransferase of Acaryochloris marina (strain MBIC 11017).